The sequence spans 400 residues: Formate-dependent phosphoribosylglycinamide formyltransferase (400 aa).

N(1)-(5-phospho-beta-D-ribosyl)glycinamide is bound by residues 21 to 22 (EL) and Glu81. Residues Arg114, Lys155, 160 to 165 (SSGKGQ), 195 to 198 (EGRI), and Glu203 contribute to the ATP site. Positions 119-313 (RLAAEKLGLP…EFELHVRAIL (195 aa)) constitute an ATP-grasp domain. The Mg(2+) site is built by Glu272 and Glu284. N(1)-(5-phospho-beta-D-ribosyl)glycinamide contacts are provided by residues Asp291, Lys360, and 367–368 (RR).

The protein belongs to the PurK/PurT family. As to quaternary structure, homodimer.

It carries out the reaction N(1)-(5-phospho-beta-D-ribosyl)glycinamide + formate + ATP = N(2)-formyl-N(1)-(5-phospho-beta-D-ribosyl)glycinamide + ADP + phosphate + H(+). It participates in purine metabolism; IMP biosynthesis via de novo pathway; N(2)-formyl-N(1)-(5-phospho-D-ribosyl)glycinamide from N(1)-(5-phospho-D-ribosyl)glycinamide (formate route): step 1/1. Involved in the de novo purine biosynthesis. Catalyzes the transfer of formate to 5-phospho-ribosyl-glycinamide (GAR), producing 5-phospho-ribosyl-N-formylglycinamide (FGAR). Formate is provided by PurU via hydrolysis of 10-formyl-tetrahydrofolate. The chain is Formate-dependent phosphoribosylglycinamide formyltransferase from Methylococcus capsulatus (strain ATCC 33009 / NCIMB 11132 / Bath).